A 413-amino-acid chain; its full sequence is Serine/threonine transporter SstT (413 aa).

9 helical membrane-spanning segments follow: residues 14–34 (GSLV…ASFS), 44–64 (LGTL…FILV), 82–102 (IVLL…VVSF), 141–161 (ALAS…GVAL), 178–198 (GVTF…FGLV), 217–237 (LMVL…LIVF), 290–310 (IPLG…VLTL), 330–350 (LVAA…LLLI), and 356–376 (LFGI…IIGV).

It belongs to the dicarboxylate/amino acid:cation symporter (DAACS) (TC 2.A.23) family.

The protein resides in the cell inner membrane. It catalyses the reaction L-serine(in) + Na(+)(in) = L-serine(out) + Na(+)(out). The enzyme catalyses L-threonine(in) + Na(+)(in) = L-threonine(out) + Na(+)(out). Involved in the import of serine and threonine into the cell, with the concomitant import of sodium (symport system). The polypeptide is Serine/threonine transporter SstT (Edwardsiella ictaluri (strain 93-146)).